Here is a 158-residue protein sequence, read N- to C-terminus: Ribosome-binding factor A (158 aa).

A disordered region spans residues Thr-130–Glu-158. Over residues Glu-145–Glu-158 the composition is skewed to acidic residues.

It belongs to the RbfA family. Monomer. Binds 30S ribosomal subunits, but not 50S ribosomal subunits or 70S ribosomes.

It localises to the cytoplasm. One of several proteins that assist in the late maturation steps of the functional core of the 30S ribosomal subunit. Associates with free 30S ribosomal subunits (but not with 30S subunits that are part of 70S ribosomes or polysomes). Required for efficient processing of 16S rRNA. May interact with the 5'-terminal helix region of 16S rRNA. The protein is Ribosome-binding factor A of Bifidobacterium longum subsp. infantis (strain ATCC 15697 / DSM 20088 / JCM 1222 / NCTC 11817 / S12).